We begin with the raw amino-acid sequence, 206 residues long: N-(5'-phosphoribosyl)anthranilate isomerase (206 aa).

It belongs to the TrpF family.

It carries out the reaction N-(5-phospho-beta-D-ribosyl)anthranilate = 1-(2-carboxyphenylamino)-1-deoxy-D-ribulose 5-phosphate. Its pathway is amino-acid biosynthesis; L-tryptophan biosynthesis; L-tryptophan from chorismate: step 3/5. This chain is N-(5'-phosphoribosyl)anthranilate isomerase, found in Chlamydia felis (strain Fe/C-56) (Chlamydophila felis).